The primary structure comprises 503 residues: Glutamate--tRNA ligase (503 aa).

Residues 12–22 carry the 'HIGH' region motif; sequence PSPTGYLHVGG. Residues 259 to 263 carry the 'KMSKS' region motif; it reads KLSKR. K262 contacts ATP.

This sequence belongs to the class-I aminoacyl-tRNA synthetase family. Glutamate--tRNA ligase type 1 subfamily. Monomer.

Its subcellular location is the cytoplasm. The catalysed reaction is tRNA(Glu) + L-glutamate + ATP = L-glutamyl-tRNA(Glu) + AMP + diphosphate. Catalyzes the attachment of glutamate to tRNA(Glu) in a two-step reaction: glutamate is first activated by ATP to form Glu-AMP and then transferred to the acceptor end of tRNA(Glu). This is Glutamate--tRNA ligase from Chlorobaculum parvum (strain DSM 263 / NCIMB 8327) (Chlorobium vibrioforme subsp. thiosulfatophilum).